A 531-amino-acid polypeptide reads, in one-letter code: Polygalacturonase (531 aa).

Residues 1–23 form the signal peptide; it reads MILSHRYTLIALAAAILSSGAHA. Asp-307 (proton donor) is an active-site residue. The active site involves His-333. The required for PGA export across the outer membrane and catalytic activity stretch occupies residues 518 to 531; sequence AFVPLKSVAPTSPI.

The protein belongs to the glycosyl hydrolase 28 family. Monomer.

The protein localises to the secreted. The enzyme catalyses (1,4-alpha-D-galacturonosyl)n+m + H2O = (1,4-alpha-D-galacturonosyl)n + (1,4-alpha-D-galacturonosyl)m.. Contributes to the wilt disease production on tomato. The sequence is that of Polygalacturonase (pglA) from Ralstonia nicotianae (strain ATCC BAA-1114 / GMI1000) (Ralstonia solanacearum).